Here is a 369-residue protein sequence, read N- to C-terminus: Anhydro-N-acetylmuramic acid kinase (369 aa).

Residue 12-19 participates in ATP binding; it reads GTSLDGVD.

The protein belongs to the anhydro-N-acetylmuramic acid kinase family.

It catalyses the reaction 1,6-anhydro-N-acetyl-beta-muramate + ATP + H2O = N-acetyl-D-muramate 6-phosphate + ADP + H(+). It participates in amino-sugar metabolism; 1,6-anhydro-N-acetylmuramate degradation. It functions in the pathway cell wall biogenesis; peptidoglycan recycling. Catalyzes the specific phosphorylation of 1,6-anhydro-N-acetylmuramic acid (anhMurNAc) with the simultaneous cleavage of the 1,6-anhydro ring, generating MurNAc-6-P. Is required for the utilization of anhMurNAc either imported from the medium or derived from its own cell wall murein, and thus plays a role in cell wall recycling. This Shigella flexneri protein is Anhydro-N-acetylmuramic acid kinase.